A 431-amino-acid polypeptide reads, in one-letter code: Divergent protein kinase domain 1B (431 aa).

Residues 1–30 (MRRLRRLAHLVLFCPFSKRLQGRLPGLRVR) are Cytoplasmic-facing. The May mediate ER retention signature appears at 5–6 (RR). The chain crosses the membrane as a helical span at residues 31 to 51 (CIFLAWLGVFAGSWLVYVHYS). Over 52-431 (SYSERCRGHV…WKKISNTKYS (380 aa)) the chain is Lumenal. Cystine bridges form between Cys57–Cys94 and Cys62–Cys117.

Belongs to the DIPK family. Among the many cysteines in the lumenal domain, most are probably involved in disulfide bonds.

The protein resides in the endoplasmic reticulum membrane. This chain is Divergent protein kinase domain 1B, found in Homo sapiens (Human).